Here is a 333-residue protein sequence, read N- to C-terminus: Ornithine carbamoyltransferase (333 aa).

Carbamoyl phosphate is bound by residues 56-59, glutamine 83, arginine 107, and 134-137; these read STRT and HPTQ. Residues asparagine 167, aspartate 231, and 235–236 each bind L-ornithine; that span reads SM. Residues 273-274 and arginine 318 contribute to the carbamoyl phosphate site; that span reads CL.

This sequence belongs to the aspartate/ornithine carbamoyltransferase superfamily. OTCase family.

Its subcellular location is the cytoplasm. It carries out the reaction carbamoyl phosphate + L-ornithine = L-citrulline + phosphate + H(+). Its pathway is amino-acid biosynthesis; L-arginine biosynthesis; L-arginine from L-ornithine and carbamoyl phosphate: step 1/3. Functionally, has vitronectin and fibronectin-binding activity. Its function is as follows. Reversibly catalyzes the transfer of the carbamoyl group from carbamoyl phosphate (CP) to the N(epsilon) atom of ornithine (ORN) to produce L-citrulline. The sequence is that of Ornithine carbamoyltransferase (argF) from Staphylococcus epidermidis (strain ATCC 12228 / FDA PCI 1200).